The chain runs to 53 residues: ATP synthase protein 8 (53 aa).

Residues 6–26 (PIGWLSLFIIFSLTFILFSMM) form a helical membrane-spanning segment.

It belongs to the ATPase protein 8 family. F-type ATPases have 2 components, CF(1) - the catalytic core - and CF(0) - the membrane proton channel.

It localises to the mitochondrion membrane. Mitochondrial membrane ATP synthase (F(1)F(0) ATP synthase or Complex V) produces ATP from ADP in the presence of a proton gradient across the membrane which is generated by electron transport complexes of the respiratory chain. F-type ATPases consist of two structural domains, F(1) - containing the extramembraneous catalytic core and F(0) - containing the membrane proton channel, linked together by a central stalk and a peripheral stalk. During catalysis, ATP synthesis in the catalytic domain of F(1) is coupled via a rotary mechanism of the central stalk subunits to proton translocation. Part of the complex F(0) domain. Minor subunit located with subunit a in the membrane. The chain is ATP synthase protein 8 (mt:ATPase8) from Ceratitis capitata (Mediterranean fruit fly).